The chain runs to 291 residues: Phosphoribosylaminoimidazole-succinocarboxamide synthase (291 aa).

This sequence belongs to the SAICAR synthetase family.

It catalyses the reaction 5-amino-1-(5-phospho-D-ribosyl)imidazole-4-carboxylate + L-aspartate + ATP = (2S)-2-[5-amino-1-(5-phospho-beta-D-ribosyl)imidazole-4-carboxamido]succinate + ADP + phosphate + 2 H(+). It participates in purine metabolism; IMP biosynthesis via de novo pathway; 5-amino-1-(5-phospho-D-ribosyl)imidazole-4-carboxamide from 5-amino-1-(5-phospho-D-ribosyl)imidazole-4-carboxylate: step 1/2. This is Phosphoribosylaminoimidazole-succinocarboxamide synthase (ADE1) from Candida albicans (Yeast).